A 123-amino-acid chain; its full sequence is Molluscan insulin-related peptide 1 (123 aa).

The signal sequence occupies residues 1–31; the sequence is MAGVRLVFTKAFMVTVLLTLLLNIGVKPAEG. Glutamine 32 carries the pyrrolidone carboxylic acid modification. Disulfide bonds link cysteine 48-cysteine 109, cysteine 60-cysteine 122, and cysteine 108-cysteine 113. A propeptide spanning residues 68–69 is cleaved from the precursor; sequence MV. A Pyrrolidone carboxylic acid modification is found at glutamine 99.

It belongs to the insulin family. As to quaternary structure, heterodimer of a B chain and an A chain linked by two disulfide bonds. Expressed in the cerebral light-green cells which are giant neuroendocrines cells involved in the control of growth.

It localises to the cytoplasmic vesicle. The protein resides in the secretory vesicle. This chain is Molluscan insulin-related peptide 1, found in Lymnaea stagnalis (Great pond snail).